Reading from the N-terminus, the 399-residue chain is Elongation factor Tu (399 aa).

One can recognise a tr-type G domain in the interval Lys-10–Gln-207. Residues Gly-19–Thr-26 are G1. GTP is bound at residue Gly-19 to Thr-26. Position 26 (Thr-26) interacts with Mg(2+). The interval Gly-60–Asn-64 is G2. The interval Asp-81–Gly-84 is G3. GTP-binding positions include Asp-81–His-85 and Asn-136–Asp-139. The segment at Asn-136 to Asp-139 is G4. The interval Ser-174 to Leu-176 is G5.

The protein belongs to the TRAFAC class translation factor GTPase superfamily. Classic translation factor GTPase family. EF-Tu/EF-1A subfamily. In terms of assembly, monomer.

Its subcellular location is the cytoplasm. It catalyses the reaction GTP + H2O = GDP + phosphate + H(+). In terms of biological role, GTP hydrolase that promotes the GTP-dependent binding of aminoacyl-tRNA to the A-site of ribosomes during protein biosynthesis. The protein is Elongation factor Tu of Kosmotoga olearia (strain ATCC BAA-1733 / DSM 21960 / TBF 19.5.1).